The sequence spans 244 residues: MAIKGPRKHLKRLAAPANWQLPRKVKAFTVRPSPGPHSMDKSLPLLLVVRDILKYADNAREAKKIIQTGKILIDGLKRKEYKHPAGLMDVLSIPEMDENYLVLFDESGRISLKKTDKTDAKLCKIVNKTVIKGGHIQLNLHDGRNQIVKVSDATKAEEDVYKTGDSVLVSIPEQSIVGHVAFGEGKLAYITGGKHVGEFAKIVEVENRALYSDIVTLENKDGEKFKTVKPYVFIVGQDEPVISM.

In terms of domain architecture, S4 RNA-binding spans 43-106; sequence LPLLLVVRDI…DENYLVLFDE (64 aa).

The protein belongs to the eukaryotic ribosomal protein eS4 family.

In Methanococcus maripaludis (strain C6 / ATCC BAA-1332), this protein is Small ribosomal subunit protein eS4.